A 311-amino-acid chain; its full sequence is Malate dehydrogenase (311 aa).

NAD(+)-binding positions include 7 to 13 (GAAGGIG) and aspartate 34. Substrate is bound by residues arginine 81 and arginine 87. NAD(+) is bound by residues asparagine 94 and 117-119 (ITN). Substrate is bound by residues asparagine 119 and arginine 153. Histidine 177 serves as the catalytic Proton acceptor. Methionine 227 contacts NAD(+).

It belongs to the LDH/MDH superfamily. MDH type 1 family. In terms of assembly, homodimer.

It catalyses the reaction (S)-malate + NAD(+) = oxaloacetate + NADH + H(+). Catalyzes the reversible oxidation of malate to oxaloacetate. This chain is Malate dehydrogenase, found in Pseudoalteromonas atlantica (strain T6c / ATCC BAA-1087).